We begin with the raw amino-acid sequence, 194 residues long: MHFEAYPPEVNSANIYAGPGPDSMLAAARAWRSLDVEMTAVQRSFNRTLLSLMDAWAGPVVMQLMEAAKPFVRWLTDLCVQLSEVERQIHEIVRAYEWAHHDMVPLAQIYNNRAERQILIDNNALGQFTAQIADLDQEYDDFWDEDGEVMRDYRLRVSDALSKLTPWKAPPPIAHSTVLVAPVSPSTASSRTDT.

Belongs to the mycobacterial PPE family. As to quaternary structure, forms a heterodimer with PE25. The dimer forms a 1:1:1 heterotrimeric complex with EspG5. PPE41 interacts directly with EspG5.

It is found in the secreted. It localises to the cell surface. Its function is as follows. The PE25/PPE41 dimer induces both a strong humoral and cellular immune response. The dimer induces necrosis, but not apoptosis, in mouse macrophage cells. It also induces activation and maturation of mouse dendritic cells and drives Th2-biased immune responses. This is PPE family protein PPE41 from Mycobacterium tuberculosis (strain ATCC 25618 / H37Rv).